The following is a 234-amino-acid chain: Leucyl/phenylalanyl-tRNA--protein transferase (234 aa).

It belongs to the L/F-transferase family.

It localises to the cytoplasm. It catalyses the reaction N-terminal L-lysyl-[protein] + L-leucyl-tRNA(Leu) = N-terminal L-leucyl-L-lysyl-[protein] + tRNA(Leu) + H(+). The enzyme catalyses N-terminal L-arginyl-[protein] + L-leucyl-tRNA(Leu) = N-terminal L-leucyl-L-arginyl-[protein] + tRNA(Leu) + H(+). The catalysed reaction is L-phenylalanyl-tRNA(Phe) + an N-terminal L-alpha-aminoacyl-[protein] = an N-terminal L-phenylalanyl-L-alpha-aminoacyl-[protein] + tRNA(Phe). Functions in the N-end rule pathway of protein degradation where it conjugates Leu, Phe and, less efficiently, Met from aminoacyl-tRNAs to the N-termini of proteins containing an N-terminal arginine or lysine. In Salmonella agona (strain SL483), this protein is Leucyl/phenylalanyl-tRNA--protein transferase.